The following is a 377-amino-acid chain: Aquaporin-2 (377 aa).

At 1-14 the chain is on the cytoplasmic side; the sequence is MAANKGINGGIKNH. The helical transmembrane segment at 15–35 threads the bilayer; sequence FIAFLGEFVGTFLFLFFAYGG. Residues 36 to 56 lie on the Extracellular side of the membrane; it reads TQTANQTSQKNPSIVASPDIN. N40 carries an N-linked (GlcNAc...) asparagine glycan. A helical membrane pass occupies residues 57–77; the sequence is QLLYIALIFGFSLTVNVWIFF. Over 78 to 87 the chain is Cytoplasmic; that stretch reads RVSGGLFNPA. The NPA 1 signature appears at 85–87; it reads NPA. Residues 88–108 form a helical membrane-spanning segment; sequence VTIALCLVGVVGPVRSIFIFI. Topologically, residues 109 to 144 are extracellular; it reads AQVVASIAAAAAVRGLLPGDTVLFSCALAPGTSIAQ. Residues 145 to 165 form a helical membrane-spanning segment; that stretch reads GLFLEMFFTIELVFTILMLAA. Topologically, residues 166–171 are cytoplasmic; that stretch reads EKTKVT. The chain crosses the membrane as a helical span at residues 172-192; that stretch reads FVAPVGIGLSLFVAELMGVAW. Topologically, residues 193–215 are extracellular; sequence TGGALNPARAFGAEVIGGFRGYH. The NPA 2 motif lies at 198–200; it reads NPA. The helical transmembrane segment at 216 to 236 threads the bilayer; that stretch reads WIYWLGPLMGAVLAAGFYKVI. Residues 237–377 lie on the Cytoplasmic side of the membrane; it reads KFLNYEQVNG…ANAQNRAKTP (141 aa). Disordered regions lie at residues 278–332 and 358–377; these read LFQT…RENE and RLSGERYVQDANAQNRAKTP. Composition is skewed to polar residues over residues 315–328 and 368–377; these read PAQQQTWPHSASTI and ANAQNRAKTP.

It belongs to the MIP/aquaporin (TC 1.A.8) family.

The protein localises to the membrane. It carries out the reaction H2O(in) = H2O(out). The catalysed reaction is glycerol(in) = glycerol(out). Water channel required to facilitate the transport of water across membranes. Involved in conidiation. In Botryotinia fuckeliana (strain B05.10) (Noble rot fungus), this protein is Aquaporin-2.